The chain runs to 350 residues: D-alanine--D-alanine ligase (350 aa).

In terms of domain architecture, ATP-grasp spans 138–346 (KSAFSSAGLS…LEQLVHKLIQ (209 aa)). Position 173-228 (173-228 (ERELNYPCFVKPANLGSSVGISKVRSRQELEAGLEQAAALDPRLVVEQGVNAREVE)) interacts with ATP. Mg(2+) contacts are provided by aspartate 299, glutamate 313, and asparagine 315.

The protein belongs to the D-alanine--D-alanine ligase family. Mg(2+) serves as cofactor. Mn(2+) is required as a cofactor.

The protein localises to the cytoplasm. It catalyses the reaction 2 D-alanine + ATP = D-alanyl-D-alanine + ADP + phosphate + H(+). The protein operates within cell wall biogenesis; peptidoglycan biosynthesis. Cell wall formation. In Synechococcus sp. (strain CC9605), this protein is D-alanine--D-alanine ligase.